Here is a 156-residue protein sequence, read N- to C-terminus: ATP synthase subunit b (156 aa).

Residues 3–23 (INFTLLAQALAFAGLIWIIAT) traverse the membrane as a helical segment.

The protein belongs to the ATPase B chain family. F-type ATPases have 2 components, F(1) - the catalytic core - and F(0) - the membrane proton channel. F(1) has five subunits: alpha(3), beta(3), gamma(1), delta(1), epsilon(1). F(0) has three main subunits: a(1), b(2) and c(10-14). The alpha and beta chains form an alternating ring which encloses part of the gamma chain. F(1) is attached to F(0) by a central stalk formed by the gamma and epsilon chains, while a peripheral stalk is formed by the delta and b chains.

Its subcellular location is the cell inner membrane. Functionally, f(1)F(0) ATP synthase produces ATP from ADP in the presence of a proton or sodium gradient. F-type ATPases consist of two structural domains, F(1) containing the extramembraneous catalytic core and F(0) containing the membrane proton channel, linked together by a central stalk and a peripheral stalk. During catalysis, ATP synthesis in the catalytic domain of F(1) is coupled via a rotary mechanism of the central stalk subunits to proton translocation. Component of the F(0) channel, it forms part of the peripheral stalk, linking F(1) to F(0). This Stenotrophomonas maltophilia (strain R551-3) protein is ATP synthase subunit b.